A 597-amino-acid polypeptide reads, in one-letter code: Arginine--tRNA ligase (597 aa).

Residues 125 to 135 (PNTNKPLHLGH) carry the 'HIGH' region motif.

It belongs to the class-I aminoacyl-tRNA synthetase family. In terms of assembly, monomer.

Its subcellular location is the cytoplasm. It catalyses the reaction tRNA(Arg) + L-arginine + ATP = L-arginyl-tRNA(Arg) + AMP + diphosphate. The chain is Arginine--tRNA ligase from Parabacteroides distasonis (strain ATCC 8503 / DSM 20701 / CIP 104284 / JCM 5825 / NCTC 11152).